A 299-amino-acid polypeptide reads, in one-letter code: Ectoine dioxygenase (299 aa).

Residues 1–40 (MTTTTTNVTDLYPTRGATEVATPRQDPVVWGSPDAPGPVS) are disordered. Position 133 (Gln133) interacts with L-ectoine. Lys139 serves as a coordination point for 2-oxoglutarate. Fe cation is bound by residues His150, Asp152, and His251.

The protein belongs to the PhyH family. EctD subfamily. As to quaternary structure, homodimer. Requires Fe(2+) as cofactor.

The catalysed reaction is L-ectoine + 2-oxoglutarate + O2 = 5-hydroxyectoine + succinate + CO2. Its function is as follows. Involved in the biosynthesis of 5-hydroxyectoine, called compatible solute, which helps organisms to survive extreme osmotic stress by acting as a highly soluble organic osmolyte. Catalyzes the 2-oxoglutarate-dependent selective hydroxylation of L-ectoine to yield (4S,5S)-5-hydroxyectoine. The sequence is that of Ectoine dioxygenase from Streptomyces coelicolor (strain ATCC BAA-471 / A3(2) / M145).